The sequence spans 116 residues: Ly-6/neurotoxin-like protein 1 (116 aa).

A signal peptide spans 1 to 20 (MTHLLTVFLVALMGLPVAQA). The region spanning 21 to 104 (LECHVCAYNG…GFATPVTLAL (84 aa)) is the UPAR/Ly6 domain. 5 cysteine pairs are disulfide-bonded: C23–C46, C26–C33, C39–C64, C68–C85, and C86–C91. N92 carries GPI-anchor amidated asparagine lipidation. Residues 93 to 116 (GAGFATPVTLALVPALLATFWSLL) constitute a propeptide, removed in mature form.

As to quaternary structure, interacts with nAChRs containing alpha-4:beta-2 (CHRNA4:CHRNB2) and alpha-7 (CHRNA7) subunits. Interacts with CHRNA4 probably in the endoplasmic reticulum prior to nAChR pentameric assembly. Interacts with KCNA2/Potassium voltage-gated channel subfamily A member 2. In terms of tissue distribution, expressed in neurons of multiple regions in the CNS, including the cerebral cortex, thalamus, substantia nigra, cerebellum, amygdala and hippocampus. Also expressed in kidney, heart and thymus, but at lower levels than in the brain. Expressed in the primary visual cortex (V1) and the lateral geniculate nucleus (at protein level).

Its subcellular location is the cell membrane. The protein localises to the cell projection. The protein resides in the dendrite. It is found in the endoplasmic reticulum. Its function is as follows. Acts in different tissues through interaction to nicotinic acetylcholine receptors (nAChRs). The proposed role as modulator of nAChR activity seems to be dependent on the nAChR subtype and stoichiometry, and to involve an effect on nAChR trafficking and its cell surface expression, and on single channel properties of the nAChR inserted in the plasma membrane. Modulates functional properties of nicotinic acetylcholine receptors (nAChRs) to prevent excessive excitation, and hence neurodegeneration. Enhances desensitization by increasing both the rate and extent of desensitization of alpha-4:beta-2-containing nAChRs and slowing recovery from desensitization. Promotes large amplitude ACh-evoked currents through alpha-4:beta-2 nAChRs. Is involved in regulation of the nAChR pentameric assembly in the endoplasmic reticulum. Shifts stoichiometry from high sensitivity alpha-4(2):beta-2(3) to low sensitivity alpha-4(3):beta-2(2) nAChR. In vitro modulates alpha-3:beta-4-containing nAChRs. Reduces cell surface expression of (alpha-3:beta-4)(2):beta-4 and (alpha-3:beta-4)(2):alpha-5 nAChRs suggesting an interaction with nAChR alpha-3(-):(+)beta-4 subunit interfaces and an allosteric mode. Corresponding single channel effects characterized by decreased unitary conductance, altered burst proportions and enhanced desensitization/inactivation seem to depend on nAChR alpha:alpha subunit interfaces and are greater in (alpha-3:beta-2)(2):alpha-3 when compared to (alpha-3:beta-2)(2):alpha-5 nAChRs. Prevents plasticity in the primary visual cortex late in life. In Mus musculus (Mouse), this protein is Ly-6/neurotoxin-like protein 1.